We begin with the raw amino-acid sequence, 388 residues long: Succinate--CoA ligase [ADP-forming] subunit beta (388 aa).

The 236-residue stretch at 9 to 244 folds into the ATP-grasp domain; that stretch reads KQLFAEYGLP…PSQEDEREAH (236 aa). Residues Lys46, 53-55, Glu99, Ser102, and Glu107 contribute to the ATP site; that span reads GRG. Positions 199 and 213 each coordinate Mg(2+). Substrate contacts are provided by residues Asn264 and 321-323; that span reads GIV.

The protein belongs to the succinate/malate CoA ligase beta subunit family. In terms of assembly, heterotetramer of two alpha and two beta subunits. It depends on Mg(2+) as a cofactor.

The catalysed reaction is succinate + ATP + CoA = succinyl-CoA + ADP + phosphate. The enzyme catalyses GTP + succinate + CoA = succinyl-CoA + GDP + phosphate. Its pathway is carbohydrate metabolism; tricarboxylic acid cycle; succinate from succinyl-CoA (ligase route): step 1/1. Succinyl-CoA synthetase functions in the citric acid cycle (TCA), coupling the hydrolysis of succinyl-CoA to the synthesis of either ATP or GTP and thus represents the only step of substrate-level phosphorylation in the TCA. The beta subunit provides nucleotide specificity of the enzyme and binds the substrate succinate, while the binding sites for coenzyme A and phosphate are found in the alpha subunit. This Aliivibrio salmonicida (strain LFI1238) (Vibrio salmonicida (strain LFI1238)) protein is Succinate--CoA ligase [ADP-forming] subunit beta.